The primary structure comprises 164 residues: UPF0305 protein MTH_812 (164 aa).

This sequence belongs to the UPF0305 family.

The polypeptide is UPF0305 protein MTH_812 (Methanothermobacter thermautotrophicus (strain ATCC 29096 / DSM 1053 / JCM 10044 / NBRC 100330 / Delta H) (Methanobacterium thermoautotrophicum)).